The following is a 388-amino-acid chain: bZIP transcription factor 1-D (388 aa).

Disordered stretches follow at residues 1-49 (MGSS…PIPP), 103-249 (FAPY…GPTT), 261-316 (TASS…RKQA), and 348-388 (ELLS…KDTN). 2 stretches are compositionally biased toward low complexity: residues 23–33 (PPATSSTATPT) and 117–129 (AAGT…TAGG). The span at 169–179 (SGASANGTISQ) shows a compositional bias: polar residues. The segment covering 180–193 (SGESGSESSSEGSE) has biased composition (low complexity). Over residues 214–231 (RSSQNGVSPSPSQAQLKQ) the composition is skewed to polar residues. The region spanning 293–356 (ELKRQKRKQS…DELLSKNSSL (64 aa)) is the bZIP domain. A basic motif region spans residues 295-314 (KRQKRKQSNRDSARRSRLRK). A compositionally biased stretch (basic and acidic residues) spans 302-316 (SNRDSARRSRLRKQA). Residues 321 to 356 (LAQRAEVLKQENASLKDEVSRIRKEYDELLSKNSSL) form a leucine-zipper region. Basic and acidic residues-rich tracts occupy residues 359–369 (NVGDKQHKTDE) and 375–388 (KLQH…KDTN).

This sequence belongs to the bZIP family. In terms of tissue distribution, highly expressed in roots and at lower levels in stems and leaves.

The protein resides in the nucleus. Probable transcription factor that may be involved in responses to fungal pathogen infection and abiotic stresses. The polypeptide is bZIP transcription factor 1-D (Triticum aestivum (Wheat)).